A 166-amino-acid chain; its full sequence is Putative universal stress protein SE_1385 (166 aa).

Belongs to the universal stress protein A family.

It is found in the cytoplasm. This chain is Putative universal stress protein SE_1385, found in Staphylococcus epidermidis (strain ATCC 12228 / FDA PCI 1200).